Here is a 361-residue protein sequence, read N- to C-terminus: PTI1-like tyrosine-protein kinase 1 (361 aa).

The disordered stretch occupies residues 16-43; the sequence is EEQQLKSSQQQSDANHKNSKPAPVAKHE. The region spanning 68-350 is the Protein kinase domain; it reads FGSKALIGEG…IVVKALQPLL (283 aa). Residues 74-82 and Lys-96 each bind ATP; that span reads IGEGSYGRV. Asp-200 functions as the Proton acceptor in the catalytic mechanism.

It belongs to the protein kinase superfamily. Tyr protein kinase family. In terms of assembly, interacts with OXI1. Post-translationally, autophosphorylated and phosphorylated by OXI1.

It is found in the cell membrane. The enzyme catalyses L-tyrosyl-[protein] + ATP = O-phospho-L-tyrosyl-[protein] + ADP + H(+). The sequence is that of PTI1-like tyrosine-protein kinase 1 (PTI11) from Arabidopsis thaliana (Mouse-ear cress).